Reading from the N-terminus, the 268-residue chain is NAD kinase (268 aa).

The active-site Proton acceptor is Asp-45. Residues 45–46, 122–123, Arg-148, Asp-150, 161–166, Ala-185, and Gln-223 contribute to the NAD(+) site; these read DG, NE, and TAYGKS.

It belongs to the NAD kinase family. Requires a divalent metal cation as cofactor.

It localises to the cytoplasm. The enzyme catalyses NAD(+) + ATP = ADP + NADP(+) + H(+). Involved in the regulation of the intracellular balance of NAD and NADP, and is a key enzyme in the biosynthesis of NADP. Catalyzes specifically the phosphorylation on 2'-hydroxyl of the adenosine moiety of NAD to yield NADP. This is NAD kinase from Latilactobacillus sakei subsp. sakei (strain 23K) (Lactobacillus sakei subsp. sakei).